A 167-amino-acid polypeptide reads, in one-letter code: NADH-ubiquinone oxidoreductase chain 6 (167 aa).

A run of 4 helical transmembrane segments spans residues 5–25, 34–54, 60–80, and 138–158; these read IIML…TIYL, MLLI…FTMC, LILM…SYFI, and FFIM…ITYI.

Belongs to the complex I subunit 6 family.

It is found in the mitochondrion membrane. It carries out the reaction a ubiquinone + NADH + 5 H(+)(in) = a ubiquinol + NAD(+) + 4 H(+)(out). In terms of biological role, core subunit of the mitochondrial membrane respiratory chain NADH dehydrogenase (Complex I) that is believed to belong to the minimal assembly required for catalysis. Complex I functions in the transfer of electrons from NADH to the respiratory chain. The immediate electron acceptor for the enzyme is believed to be ubiquinone. The chain is NADH-ubiquinone oxidoreductase chain 6 (ND6) from Apis mellifera ligustica (Common honeybee).